The sequence spans 543 residues: MLRYDERKLNNLTLSSFSKSGVSSDTRLYIAKENTDKAYVAPEKFSSKVLTWLGKMPLFKNTEVVQKHTENIRVQNQKILQTFLQALTEKYGEKAVNNALYMSSINMNKPLTQRLVVQITECVKGADGGFINLIKNKDNVGVMNAALVIKGGDTKVTEQNNDVGAESKQPLLDIALKGLKRTIPQLEQMDGNSLRENFQEMASGNGPLRSLMTNLQSLNKIPEAKQLNDYVTTLKNIQIGADRFSQWGTCGGEVERWIDKASTHELTQAVKKIHVIAKELKNVTAELEKIKAGASMPQTMSGPTLGLARFAVSSIPINQQTQVKLSDGMPVPVNTLTFDGKPVALAGSCPKNTPDALEAHMKMLLEKECSCLVVLTSEDQMQAKQLPAYFRGSYTFGEVHTNSQKVSSASQGGAIDQYNMQLSCGEKRYTIPVLHVKNWPDHQPLPSTDQLEYLADRVKNSNQNGAPGRSSSDKHLPMIHCLGGVGRTGTMAAALVLKDNPHSNLEQVRADFRNSRNNRMLEDASQFVQLKAMQAQLLMTTAS.

Residues 35–139 (TDKAYVAPEK…FINLIKNKDN (105 aa)) form a chaperone-binding region. The Bacterial Rho-GAP domain maps to 162 to 293 (DVGAESKQPL…TAELEKIKAG (132 aa)). Residues 315–543 (IPINQQTQVK…QAQLLMTTAS (229 aa)) form the Tyrosine-protein phosphatase domain. The active-site Phosphocysteine intermediate is the C481.

In terms of assembly, forms a complex with SicP.

The protein resides in the secreted. The protein localises to the host cytoplasm. The catalysed reaction is O-phospho-L-tyrosyl-[protein] + H2O = L-tyrosyl-[protein] + phosphate. In terms of biological role, effector proteins function to alter host cell physiology and promote bacterial survival in host tissues. This protein includes tyrosine phosphatase and GTPase activating protein (GAP) activities. After bacterial internalization, GAP mediates the reversal of the cytoskeletal changes induced by SopE. This function is independent of its tyrosine phosphatase activity, which remains unclear. In Salmonella typhi, this protein is Secreted effector protein SptP (sptP).